A 130-amino-acid chain; its full sequence is Methylglyoxal synthase (130 aa).

The MGS-like domain occupies 1–130 (MSKPRIALIA…DLARNMQDVC (130 aa)). Substrate-binding positions include His-11, Lys-15, 37 to 40 (TGTT), and 57 to 58 (SG). The active-site Proton donor/acceptor is the Asp-63. His-90 is a binding site for substrate.

This sequence belongs to the methylglyoxal synthase family.

The catalysed reaction is dihydroxyacetone phosphate = methylglyoxal + phosphate. Catalyzes the formation of methylglyoxal from dihydroxyacetone phosphate. The chain is Methylglyoxal synthase from Burkholderia cenocepacia (strain HI2424).